Reading from the N-terminus, the 148-residue chain is NADPH-dependent 7-cyano-7-deazaguanine reductase (148 aa).

The active-site Thioimide intermediate is the cysteine 50. Aspartate 57 (proton donor) is an active-site residue. Residues 72–74 (VES) and 91–92 (HE) each bind substrate.

It belongs to the GTP cyclohydrolase I family. QueF type 1 subfamily.

The protein resides in the cytoplasm. It carries out the reaction 7-aminomethyl-7-carbaguanine + 2 NADP(+) = 7-cyano-7-deazaguanine + 2 NADPH + 3 H(+). It participates in tRNA modification; tRNA-queuosine biosynthesis. Its function is as follows. Catalyzes the NADPH-dependent reduction of 7-cyano-7-deazaguanine (preQ0) to 7-aminomethyl-7-deazaguanine (preQ1). This chain is NADPH-dependent 7-cyano-7-deazaguanine reductase, found in Helicobacter pylori (strain HPAG1).